The following is a 348-amino-acid chain: Putative olfactory receptor 3A4 (348 aa).

At Met1–Pro28 the chain is on the extracellular side. N-linked (GlcNAc...) asparagine glycosylation occurs at Asn8. A helical transmembrane segment spans residues Ile29–Ile52. The Cytoplasmic segment spans residues Leu53–Ser60. Residues Pro61–Pro82 form a helical membrane-spanning segment. Topologically, residues Ala83–Glu103 are extracellular. The cysteines at positions 100 and 192 are disulfide-linked. The helical transmembrane segment at Leu104–Tyr123 threads the bilayer. Over Asp124–Ile143 the chain is Cytoplasmic. Residues Gln144–Thr161 traverse the membrane as a helical segment. Residues Gln162 to Gly199 are Extracellular-facing. Residues Gln200 to Ala222 form a helical membrane-spanning segment. The Cytoplasmic portion of the chain corresponds to His223 to Lys239. A helical transmembrane segment spans residues Ala240–Tyr262. Over Thr263–Lys275 the chain is Extracellular. A helical membrane pass occupies residues Gly276–Thr295. The Cytoplasmic segment spans residues Ser296–Leu348.

It belongs to the G-protein coupled receptor 1 family.

The protein localises to the cell membrane. Functionally, odorant receptor. The chain is Putative olfactory receptor 3A4 (OR3A4P) from Homo sapiens (Human).